A 598-amino-acid polypeptide reads, in one-letter code: uncharacterized protein (598 aa).

This is an uncharacterized protein from Homo sapiens (Human).